We begin with the raw amino-acid sequence, 200 residues long: MKFSPLLDEMMKALQVLPGVGPKSAQRMAFTLLERERSGGLRLAQLLSRALTEIGHCSHCRTFTENERCEICANPKREENGLLCVVESPADVAAIEQTGQFSGRYFVLMGHLSPLDGIGPEELGLEILERRLKDEAISELILATNPTIEGDATAWYIADMARAAGVKVSRIAHGVPVGGELELVDGTTLSHSLMGRQPLN.

The C4-type zinc-finger motif lies at 57-72; the sequence is CSHCRTFTENERCEIC. In terms of domain architecture, Toprim spans 81–176; the sequence is GLLCVVESPA…KVSRIAHGVP (96 aa).

The protein belongs to the RecR family.

May play a role in DNA repair. It seems to be involved in an RecBC-independent recombinational process of DNA repair. It may act with RecF and RecO. The chain is Recombination protein RecR from Aeromonas hydrophila subsp. hydrophila (strain ATCC 7966 / DSM 30187 / BCRC 13018 / CCUG 14551 / JCM 1027 / KCTC 2358 / NCIMB 9240 / NCTC 8049).